The sequence spans 950 residues: Coiled-coil domain-containing protein 80 (950 aa).

Residues 1–21 (MTWRMGPRFTMLLAMWLVCGS) form the signal peptide. Disordered stretches follow at residues 28–64 (TIRGSHGGRKVPLVSPDSSRPARFLRHTGRSRGIERS), 88–119 (PTEPPARSDINGAAVRPEQRPAARGSPREMIR), and 289–609 (QVVA…QSPK). 2 stretches are compositionally biased toward basic and acidic residues: residues 104-119 (PEQRPAARGSPREMIR) and 308-317 (SEKKKEDPRR). Positions 348-374 (PRATTLPPAPATTVTRSTSRAVTVAAR) are enriched in low complexity. The segment covering 376-385 (MTTTAFPTTQ) has biased composition (polar residues). The span at 418 to 428 (SRKDQHRERPQ) shows a compositional bias: basic and acidic residues. Positions 435–454 (KATSLESFTNAPPTTISEPS) are enriched in polar residues. Basic and acidic residues-rich tracts occupy residues 462–478 (RFRDNRMDRREHGHRDP), 487–499 (PAKEKPPKKKAQD), and 538–582 (KKHE…EKEK). Glycyl lysine isopeptide (Lys-Gly) (interchain with G-Cter in SUMO2) cross-links involve residues K545 and K548. A coiled-coil region spans residues 560-587 (DKLLKSEKQMKKSEKKSKQEKEKSKKKK). Over residues 598–609 (KPTNKHFTQSPK) the composition is skewed to polar residues.

The protein belongs to the CCDC80 family. In terms of assembly, binds to various extracellular matrix proteins. Phosphorylated. Expressed in dermal papilla and dermal fibroblasts (at protein level). Expressed in heart, thymus, placenta, pancreas, colon, epithelium, spleen and osteoblasts.

The protein localises to the secreted. It is found in the extracellular space. Its subcellular location is the extracellular matrix. Its function is as follows. Promotes cell adhesion and matrix assembly. This chain is Coiled-coil domain-containing protein 80 (CCDC80), found in Homo sapiens (Human).